We begin with the raw amino-acid sequence, 81 residues long: Cytotoxin 3b (81 aa).

Residues 1 to 21 (MKTLLLTLVVVTIVCLDLGYT) form the signal peptide. 4 cysteine pairs are disulfide-bonded: C24–C42, C35–C59, C63–C74, and C75–C80.

It belongs to the three-finger toxin family. Short-chain subfamily. Type IA cytotoxin sub-subfamily. Monomer in solution; Homodimer and oligomer in the presence of negatively charged lipids forming a pore with a size ranging between 20 and 30 Angstroms. Expressed by the venom gland.

The protein localises to the secreted. It localises to the target cell membrane. Shows cytolytic activity on many different cells by forming pore in lipid membranes. In vivo, increases heart rate or kills the animal by cardiac arrest. In addition, it binds to heparin with high affinity, interacts with Kv channel-interacting protein 1 (KCNIP1) in a calcium-independent manner, and binds to integrin alpha-V/beta-3 (ITGAV/ITGB3) with moderate affinity. The sequence is that of Cytotoxin 3b from Naja atra (Chinese cobra).